The sequence spans 157 residues: Small ribosomal subunit protein uS7 (157 aa).

Belongs to the universal ribosomal protein uS7 family. As to quaternary structure, part of the 30S ribosomal subunit. Contacts proteins S9 and S11.

Its function is as follows. One of the primary rRNA binding proteins, it binds directly to 16S rRNA where it nucleates assembly of the head domain of the 30S subunit. Is located at the subunit interface close to the decoding center, probably blocks exit of the E-site tRNA. The protein is Small ribosomal subunit protein uS7 of Verminephrobacter eiseniae (strain EF01-2).